The sequence spans 466 residues: Glutamate--tRNA ligase 1 (466 aa).

The 'HIGH' region signature appears at 9–19 (PSPTGMLHIGG). The short motif at 238 to 242 (KLSKR) is the 'KMSKS' region element. Residue Lys241 participates in ATP binding.

This sequence belongs to the class-I aminoacyl-tRNA synthetase family. Glutamate--tRNA ligase type 1 subfamily. Monomer.

Its subcellular location is the cytoplasm. It carries out the reaction tRNA(Glu) + L-glutamate + ATP = L-glutamyl-tRNA(Glu) + AMP + diphosphate. Its function is as follows. Catalyzes the attachment of glutamate to tRNA(Glu) in a two-step reaction: glutamate is first activated by ATP to form Glu-AMP and then transferred to the acceptor end of tRNA(Glu). This Acidiphilium cryptum (strain JF-5) protein is Glutamate--tRNA ligase 1.